A 219-amino-acid chain; its full sequence is uncharacterized protein (219 aa).

The region spanning 4–79 (GLRIIAENKI…YIIEIEEEES (76 aa)) is the ACT domain.

This is an uncharacterized protein from Archaeoglobus fulgidus (strain ATCC 49558 / DSM 4304 / JCM 9628 / NBRC 100126 / VC-16).